Consider the following 300-residue polypeptide: ADP-ribosyl cyclase/cyclic ADP-ribose hydrolase 1 (300 aa).

Residues 1 to 21 (MANCEFSPVSGDKPCCRLSRR) are Cytoplasmic-facing. The chain crosses the membrane as a helical; Signal-anchor for type II membrane protein span at residues 22-42 (AQLCLGVSILVLILVVVLAVV). Topologically, residues 43–300 (VPRWRQQWSG…PEDSSCTSEI (258 aa)) are extracellular. Disulfide bonds link Cys67/Cys82, Cys99/Cys180, and Cys160/Cys173. The N-linked (GlcNAc...) asparagine glycan is linked to Asn100. Residue Cys119 is part of the active site. An N-linked (GlcNAc...) asparagine glycan is attached at Asn164. Cys201 is a catalytic residue. 2 N-linked (GlcNAc...) asparagine glycosylation sites follow: Asn209 and Asn219. 2 disulfides stabilise this stretch: Cys254–Cys275 and Cys287–Cys296.

Belongs to the ADP-ribosyl cyclase family. Homodimer. Expressed at high levels in pancreas, liver, kidney, brain, testis, ovary, placenta, malignant lymphoma and neuroblastoma.

It localises to the cell surface. It is found in the membrane. It carries out the reaction 2'-phospho-cyclic ADP-ribose + nicotinate = nicotinate-adenine dinucleotide phosphate. It catalyses the reaction NAD(+) = cyclic ADP-beta-D-ribose + nicotinamide + H(+). The enzyme catalyses NAD(+) + H2O = ADP-D-ribose + nicotinamide + H(+). The catalysed reaction is cyclic ADP-beta-D-ribose + H2O = ADP-D-ribose. It carries out the reaction NADP(+) = 2'-phospho-cyclic ADP-ribose + nicotinamide. It catalyses the reaction nicotinate + NADP(+) = nicotinate-adenine dinucleotide phosphate + nicotinamide. Its activity is regulated as follows. ATP inhibits the cADPR hydrolyzing activity. Its function is as follows. Synthesizes cyclic ADP-ribose (cADPR), a second messenger for glucose-induced insulin secretion. Synthesizes the Ca(2+) mobilizer nicotinate-adenine dinucleotide phosphate, NAADP(+), from 2'-phospho-cADPR and nicotinic acid, as well as from NADP(+) and nicotinic acid. At both pH 5.0 and pH 7.4 preferentially transforms 2'-phospho-cADPR into NAADP(+), while preferentially cleaving NADP(+) to cADPR and ADPRP rather than into NADDP(+). Has cADPR hydrolase activity. This is ADP-ribosyl cyclase/cyclic ADP-ribose hydrolase 1 (CD38) from Homo sapiens (Human).